The chain runs to 335 residues: ATP-dependent 6-phosphofructokinase (335 aa).

Gly11 contacts ATP. 21-25 (RAVVR) is a binding site for ADP. ATP is bound by residues 72–73 (RY) and 102–105 (GDGS). Asp103 is a Mg(2+) binding site. Residue 125–127 (TID) participates in substrate binding. The active-site Proton acceptor is Asp127. Position 154 (Arg154) interacts with ADP. Substrate-binding positions include Arg162 and 169-171 (MGR). Residues 185 to 187 (GAD) and 213 to 215 (KKH) contribute to the ADP site. Substrate-binding positions include Glu222, Arg244, and 250–253 (HIQR).

The protein belongs to the phosphofructokinase type A (PFKA) family. ATP-dependent PFK group I subfamily. Prokaryotic clade 'B1' sub-subfamily. As to quaternary structure, homotetramer. Mg(2+) is required as a cofactor.

It is found in the cytoplasm. The enzyme catalyses beta-D-fructose 6-phosphate + ATP = beta-D-fructose 1,6-bisphosphate + ADP + H(+). Its pathway is carbohydrate degradation; glycolysis; D-glyceraldehyde 3-phosphate and glycerone phosphate from D-glucose: step 3/4. Allosterically activated by ADP and other diphosphonucleosides, and allosterically inhibited by phosphoenolpyruvate. In terms of biological role, catalyzes the phosphorylation of D-fructose 6-phosphate to fructose 1,6-bisphosphate by ATP, the first committing step of glycolysis. The protein is ATP-dependent 6-phosphofructokinase of Streptococcus pneumoniae serotype 4 (strain ATCC BAA-334 / TIGR4).